Here is a 154-residue protein sequence, read N- to C-terminus: AP-1 complex subunit sigma-3 (154 aa).

Belongs to the adaptor complexes small subunit family. As to quaternary structure, adaptor protein complex 1 (AP-1) is a heterotetramer composed of two large adaptins (gamma-type subunit AP1G1 and beta-type subunit AP1B1), a medium adaptin (mu-type subunit AP1M1 or AP1M2) and a small adaptin (sigma-type subunit AP1S1 or AP1S2 or AP1S3).

It localises to the golgi apparatus. The protein resides in the cytoplasmic vesicle membrane. It is found in the membrane. Its subcellular location is the clathrin-coated pit. Its function is as follows. Subunit of clathrin-associated adaptor protein complex 1 that plays a role in protein sorting in the late-Golgi/trans-Golgi network (TGN) and/or endosomes. The AP complexes mediate both the recruitment of clathrin to membranes and the recognition of sorting signals within the cytosolic tails of transmembrane cargo molecules. Involved in TLR3 trafficking. The protein is AP-1 complex subunit sigma-3 (Ap1s3) of Mus musculus (Mouse).